Consider the following 134-residue polypeptide: Putative transposase InsN for insertion sequence element IS911A (134 aa).

This sequence belongs to the transposase 8 family.

Functionally, involved in the transposition of the insertion sequence IS911. In Escherichia coli (strain K12), this protein is Putative transposase InsN for insertion sequence element IS911A (insN1).